A 712-amino-acid polypeptide reads, in one-letter code: Polyribonucleotide nucleotidyltransferase (712 aa).

Residues Asp485 and Asp491 each coordinate Mg(2+). Residues 552–611 (PKITTISVPKEKIRDVIGQGGKVIREIVEYSGAKIDINDDGTIMIAASSEDQATRAIERI) form the KH domain. The S1 motif domain maps to 621 to 689 (GAIYTGKVVK…DRGKVKLSMR (69 aa)).

It belongs to the polyribonucleotide nucleotidyltransferase family. It depends on Mg(2+) as a cofactor.

The protein resides in the cytoplasm. It catalyses the reaction RNA(n+1) + phosphate = RNA(n) + a ribonucleoside 5'-diphosphate. Its function is as follows. Involved in mRNA degradation. Catalyzes the phosphorolysis of single-stranded polyribonucleotides processively in the 3'- to 5'-direction. The protein is Polyribonucleotide nucleotidyltransferase of Gluconacetobacter diazotrophicus (strain ATCC 49037 / DSM 5601 / CCUG 37298 / CIP 103539 / LMG 7603 / PAl5).